Here is an 88-residue protein sequence, read N- to C-terminus: Kunitz-type U15-theraphotoxin-Hhn1r (88 aa).

The signal sequence occupies residues 1-27 (MGIARILSAVLFLSVLFVVTFPTLLSA). A propeptide spanning residues 28–33 (DHHDGR) is cleaved from the precursor. The 49-residue stretch at 37–85 (CRLPSDRGRCKASFERWYFNGTTCTKFVYGGYGGNDNRFPTEKACMKRC) folds into the BPTI/Kunitz inhibitor domain. Intrachain disulfides connect Cys-37–Cys-85 and Cys-60–Cys-81.

This sequence belongs to the venom Kunitz-type family. 01 (intermediate) subfamily. Expressed by the venom gland.

The protein resides in the secreted. Serine protease inhibitor that inhibits trypsin at a molar ratio of 1:1. The sequence is that of Kunitz-type U15-theraphotoxin-Hhn1r from Cyriopagopus hainanus (Chinese bird spider).